The sequence spans 508 residues: Cyclic AMP-responsive element-binding protein 5 (508 aa).

The segment at 16–40 (FVCSAPGCSQRFPTEDHLMIHRHKH) adopts a C2H2-type zinc-finger fold. A Glycyl lysine isopeptide (Lys-Gly) (interchain with G-Cter in SUMO2) cross-link involves residue Lys-50. Thr-59 and Thr-61 each carry phosphothreonine. A Phosphoserine modification is found at Ser-137. Residues 265 to 391 (RQDQTPHHHM…LERNRAAATR (127 aa)) are disordered. Composition is skewed to basic residues over residues 271 to 280 (HHHMHSHPHQ) and 289 to 326 (PYPH…HPAH). Over residues 337–346 (TGNQAQVSPA) the composition is skewed to polar residues. Residues 347–357 (TQQMQPTQTIQ) are compositionally biased toward low complexity. Basic and acidic residues predominate over residues 369–386 (VVDEDPDERRRKFLERNR). The 64-residue stretch at 375–438 (DERRRKFLER…AQLKQLLLTH (64 aa)) folds into the bZIP domain. The segment at 377 to 397 (RRRKFLERNRAAATRCRQKRK) is basic motif. The segment at 403-431 (LEKKAEELTQTNMQLQNEVSMLKNEVAQL) is leucine-zipper. The segment at 449-468 (ESQGYLSPESSPPASPVPAC) is disordered.

This sequence belongs to the bZIP family. As to quaternary structure, binds DNA as a homodimer or as a heterodimer with JUN or ATF2/CREBP1.

The protein resides in the nucleus. Its function is as follows. Binds to the cAMP response element and activates transcription. The polypeptide is Cyclic AMP-responsive element-binding protein 5 (CREB5) (Homo sapiens (Human)).